Consider the following 883-residue polypeptide: Glutamate receptor 2 (883 aa).

The first 24 residues, 1-24, serve as a signal peptide directing secretion; it reads MQKIMHISVLLSPVLWGLIFGVSS. The Extracellular portion of the chain corresponds to 25-543; the sequence is NSIQIGGLFP…GVFSFLDPLA (519 aa). The cysteines at positions 78 and 330 are disulfide-linked. Residues Asn256, Asn370, Asn406, and Asn413 are each glycosylated (N-linked (GlcNAc...) asparagine). Residues Pro499, Thr501, and Arg506 each coordinate L-glutamate. The chain crosses the membrane as a helical span at residues 544 to 564; it reads YEIWMCIVFAYIGVSVVLFLV. Residues 565–591 lie on the Cytoplasmic side of the membrane; that stretch reads SRFSPYEWHTEEFEDGRETQSSESTNE. An intramembrane region (helical; Pore-forming) is located at residues 592–607; the sequence is FGIFNSLWFSLGAFMQ. Residues 608–610 lie within the membrane without spanning it; the sequence is QGC. Cys610 carries S-palmitoyl cysteine lipidation. At 611–616 the chain is on the cytoplasmic side; that stretch reads DISPRS. A helical transmembrane segment spans residues 617-637; that stretch reads LSGRIVGGVWWFFTLIIISSY. At 638–812 the chain is on the extracellular side; that stretch reads TANLAAFLTV…EKTSALSLSN (175 aa). Ser675 and Thr676 together coordinate L-glutamate. Ser683 is subject to Phosphoserine; by PKC. A Phosphoserine; by PKG modification is found at Ser717. Glu726 is an L-glutamate binding site. A disulfide bridge connects residues Cys739 and Cys794. A helical membrane pass occupies residues 813-833; the sequence is VAGVFYILVGGLGLAMLVALI. The Cytoplasmic segment spans residues 834-883; it reads EFCYKSRAEAKRMKVAKNAQNINPSSSQNSQNFATYKEGYNVYGIESVKI. The S-palmitoyl cysteine moiety is linked to residue Cys836. Ser860 and Ser863 each carry phosphoserine. A required for interaction with IQSEC1 region spans residues 867–877; it reads ATYKEGYNVYG. Tyr876 carries the phosphotyrosine modification. Phosphoserine is present on Ser880.

It belongs to the glutamate-gated ion channel (TC 1.A.10.1) family. GRIA2 subfamily. As to quaternary structure, homotetramer or heterotetramer of pore-forming glutamate receptor subunits. Tetramers may be formed by the dimerization of dimers. May interact with MPP4. Forms a ternary complex with GRIP1 and CSPG4. Interacts with ATAD1 in an ATP-dependent manner. ATAD1-catalyzed ATP hydrolysis disrupts binding to ATAD1 and to GRIP1 and leads to AMPAR complex disassembly. Interacts with GRIP1 and GRIP2. Interacts with NSF via its C-terminus. Isoform 1, but not isoform 3, interacts with PICK1. Interacts with CACNG2. Interacts with GRIA1 and SYNDIG1. Part of a complex containing GRIA2, NSF and NAPA and/or NAPB. Interacts with SNX27 (via PDZ domain); the interaction is required for recycling to the plasma membrane when endocytosed and prevent degradation in lysosomes. Interacts with LRFN1. Found in a complex with GRIA1, GRIA3, GRIA4, CNIH2, CNIH3, CACNG2, CACNG3, CACNG4, CACNG5, CACNG7 and CACNG8. Interacts with CACNG5. Interacts with OLFM2. Interacts with AP4B1, AP4E1 and AP4M1; probably indirect it mediates the somatodendritic localization of GRIA2 in neurons. Forms a complex with GRIP1, NSG1 and STX12; controls the intracellular fate of AMPAR and the endosomal sorting of the GRIA2 subunit toward recycling and membrane targeting. Interacts with IQSEC1; the interaction is required for ARF6 activation. Interacts (heterotetramer form) with CNIH2 and CNIH3; this interaction promotes expression at the plasma membrane and extensively modulates their gating properties by slowing deactivation and desensitization kinetics. Palmitoylated. Depalmitoylated upon L-glutamate stimulation. ZDHHC3/GODZ specifically palmitoylates Cys-610, which leads to Golgi retention and decreased cell surface expression. In contrast, Cys-836 palmitoylation does not affect cell surface expression but regulates stimulation-dependent endocytosis. In terms of processing, N-glycosylated. Post-translationally, ubiquitinated by RNF167, leading to its degradation. Phosphorylation at Tyr-876 is required for interaction with IQSEC1 and ARF6 activation, which in turn triggers AMPAR internalization for persistent synaptic depression. As to expression, detected in brain cortex, hippocampus and cerebellum (at protein level). Detected in hippocampus.

The protein localises to the cell membrane. Its subcellular location is the postsynaptic cell membrane. It is found in the postsynaptic density membrane. It catalyses the reaction Ca(2+)(in) = Ca(2+)(out). The enzyme catalyses Na(+)(in) = Na(+)(out). Ionotropic glutamate receptor that functions as a ligand-gated cation channel, gated by L-glutamate and glutamatergic agonists such as alpha-amino-3-hydroxy-5-methyl-4-isoxazolepropionic acid (AMPA), quisqualic acid, and kainic acid. L-glutamate acts as an excitatory neurotransmitter at many synapses in the central nervous system and plays an important role in fast excitatory synaptic transmission. Binding of the excitatory neurotransmitter L-glutamate induces a conformation change, leading to the opening of the cation channel, and thereby converts the chemical signal to an electrical impulse upon entry of monovalent and divalent cations such as sodium and calcium. The receptor then desensitizes rapidly and enters in a transient inactive state, characterized by the presence of bound agonist. In the presence of CACNG4 or CACNG7 or CACNG8, shows resensitization which is characterized by a delayed accumulation of current flux upon continued application of L-glutamate. Through complex formation with NSG1, GRIP1 and STX12 controls the intracellular fate of AMPAR and the endosomal sorting of the GRIA2 subunit toward recycling and membrane targeting. This Mus musculus (Mouse) protein is Glutamate receptor 2.